The chain runs to 103 residues: Small ribosomal subunit protein uS10 (103 aa).

This sequence belongs to the universal ribosomal protein uS10 family. Part of the 30S ribosomal subunit.

Its function is as follows. Involved in the binding of tRNA to the ribosomes. The polypeptide is Small ribosomal subunit protein uS10 (Aromatoleum aromaticum (strain DSM 19018 / LMG 30748 / EbN1) (Azoarcus sp. (strain EbN1))).